Consider the following 448-residue polypeptide: Chaperone SurA (448 aa).

Positions 1–27 are cleaved as a signal peptide; it reads MKKTLRFAAVASGLVASLITVAPSASA. 2 consecutive PpiC domains span residues 185 to 288 and 301 to 399; these read QQDL…RLVE and IVQT…QVLG.

The protein resides in the periplasm. It catalyses the reaction [protein]-peptidylproline (omega=180) = [protein]-peptidylproline (omega=0). Functionally, chaperone involved in the correct folding and assembly of outer membrane proteins. Recognizes specific patterns of aromatic residues and the orientation of their side chains, which are found more frequently in integral outer membrane proteins. May act in both early periplasmic and late outer membrane-associated steps of protein maturation. In Burkholderia mallei (strain ATCC 23344), this protein is Chaperone SurA.